We begin with the raw amino-acid sequence, 1250 residues long: Phospholipid-transporting ATPase IC (1250 aa).

Acidic residues-rich tracts occupy residues 1-13 (MDTD…EDDS) and 24-40 (SDDE…TDEP). Residues 1–52 (MDTDYESTYEDDSQVPNDDVVPYSDDETDDELDSPQTDEPEQNRRNVQAEQS) are disordered. Residues 1–133 (MDTDYESTYE…VLLILQTIPQ (133 aa)) are Cytoplasmic-facing. Residues 134–154 (ISTVTWSTTLIPLLLVLGITA) form a helical membrane-spanning segment. Residues 155–338 (IKDLVDDIAR…TKIDYLMNYM (184 aa)) are Exoplasmic loop-facing. The chain crosses the membrane as a helical span at residues 339–359 (VYTIFVLLILAAAGLAIGQTF). Residues 360–385 (WEAKLGAANVSWYLYDGNNYSPSYRG) lie on the Cytoplasmic side of the membrane. Residues 386–406 (FLAFWGYIIVLNTMVPISLYV) form a helical membrane-spanning segment. The Exoplasmic loop portion of the chain corresponds to 407-956 (SVEVIRLGQS…KFLRYFFYKN (550 aa)). D454 acts as the 4-aspartylphosphate intermediate in catalysis. ATP-binding residues include D454, K455, T456, E553, F594, K617, R650, T730, G731, D732, R865, and K871. D454 is a Mg(2+) binding site. Residue T456 participates in Mg(2+) binding. D891 contacts Mg(2+). Positions 894 and 895 each coordinate ATP. D895 lines the Mg(2+) pocket. The helical transmembrane segment at 957–977 (FSFTLVHFWYSFFNGFSAQTV) threads the bilayer. The Cytoplasmic segment spans residues 978 to 980 (YED). Residues 981 to 1001 (WFITLYNVLYSSLPVLLVGLL) traverse the membrane as a helical segment. Residues 1002 to 1034 (DQDVSDKLSLAFPRLYVPGQKDLLFNYKKFFLS) lie on the Exoplasmic loop side of the membrane. The helical transmembrane segment at 1035–1055 (LFHGIVTSLIIFFIPYGAFLL) threads the bilayer. At 1056–1069 (TMGQDGEAPSDYQS) the chain is on the cytoplasmic side. Residues 1070-1090 (FAVTTATALVITVNFQIGLDT) traverse the membrane as a helical segment. Residues 1091-1092 (SY) are Exoplasmic loop-facing. Residues 1093-1113 (WTFVNAFSIFGSIAIYFGIMF) traverse the membrane as a helical segment. Residues 1114–1117 (DLHS) are Cytoplasmic-facing. A helical membrane pass occupies residues 1118–1138 (AGIHVLFPSMFIFTGAAPNAL). Topologically, residues 1139-1140 (RQ) are exoplasmic loop. A helical membrane pass occupies residues 1141–1161 (PYLWLTIILTVAFCLLPIVAL). Over 1162-1250 (RFLAKTIWPS…AQITHFTPQT (89 aa)) the chain is Cytoplasmic.

The protein belongs to the cation transport ATPase (P-type) (TC 3.A.3) family. Type IV subfamily. In terms of assembly, component of a P4-ATPase flippase complex which consists of a catalytic alpha subunit and an accessory beta subunit. The flippase ATP8B1:TMEM30A complex can form an intermediate phosphoenzyme in vitro. Also interacts with beta subunit TMEM30B. Mg(2+) is required as a cofactor.

It is found in the cell membrane. It localises to the apical cell membrane. The protein resides in the cell projection. Its subcellular location is the stereocilium. The protein localises to the endoplasmic reticulum. It is found in the golgi apparatus. The enzyme catalyses ATP + H2O + phospholipidSide 1 = ADP + phosphate + phospholipidSide 2.. It carries out the reaction a 1,2-diacyl-sn-glycero-3-phospho-L-serine(out) + ATP + H2O = a 1,2-diacyl-sn-glycero-3-phospho-L-serine(in) + ADP + phosphate + H(+). In terms of biological role, catalytic component of a P4-ATPase flippase complex which catalyzes the hydrolysis of ATP coupled to the transport of aminophospholipids from the outer to the inner leaflet of various membranes and ensures the maintenance of asymmetric distribution of phospholipids. Phospholipid translocation also seems to be implicated in vesicle formation and in uptake of lipid signaling molecules. May also participate in the establishment of the canalicular membrane integrity by ensuring asymmetric distribution of phospholipids in the canicular membrane. The polypeptide is Phospholipid-transporting ATPase IC (atp8b1) (Xenopus tropicalis (Western clawed frog)).